Consider the following 342-residue polypeptide: Anthranilate phosphoribosyltransferase (342 aa).

5-phospho-alpha-D-ribose 1-diphosphate is bound by residues glycine 81, 84–85, threonine 89, 91–94, 109–117, and threonine 121; these read GD, NIST, and KHGNRALSS. Residue glycine 81 participates in anthranilate binding. Serine 93 lines the Mg(2+) pocket. Anthranilate is bound at residue asparagine 112. Arginine 167 lines the anthranilate pocket. Mg(2+) is bound by residues aspartate 225 and glutamate 226.

Belongs to the anthranilate phosphoribosyltransferase family. As to quaternary structure, homodimer. Requires Mg(2+) as cofactor.

It carries out the reaction N-(5-phospho-beta-D-ribosyl)anthranilate + diphosphate = 5-phospho-alpha-D-ribose 1-diphosphate + anthranilate. It participates in amino-acid biosynthesis; L-tryptophan biosynthesis; L-tryptophan from chorismate: step 2/5. Functionally, catalyzes the transfer of the phosphoribosyl group of 5-phosphorylribose-1-pyrophosphate (PRPP) to anthranilate to yield N-(5'-phosphoribosyl)-anthranilate (PRA). This is Anthranilate phosphoribosyltransferase from Agrobacterium fabrum (strain C58 / ATCC 33970) (Agrobacterium tumefaciens (strain C58)).